A 408-amino-acid polypeptide reads, in one-letter code: ORC1-type DNA replication protein 15 (408 aa).

ATP-binding positions include 60–64 (VGKTA), Y208, and R220.

It belongs to the CDC6/cdc18 family.

Functionally, involved in regulation of DNA replication. The sequence is that of ORC1-type DNA replication protein 15 (cdc6o) from Haloarcula marismortui (strain ATCC 43049 / DSM 3752 / JCM 8966 / VKM B-1809) (Halobacterium marismortui).